The chain runs to 458 residues: Monomethylamine methyltransferase MtmB2 (458 aa).

A non-standard amino acid (pyrrolysine) is located at residue Pyl202.

Belongs to the monomethylamine methyltransferase family. Can form a complex with MtmC (MtmC1 or MtmC2).

The catalysed reaction is Co(I)-[methylamine-specific corrinoid protein] + methylamine + H(+) = methyl-Co(III)-[methylamine-specific corrinoid protein] + NH4(+). Its pathway is one-carbon metabolism; methanogenesis from methylamine. Functionally, catalyzes the transfer of the methyl group from monomethylamine to the corrinoid cofactor of MtmC (MtmC1 or MtmC2). This chain is Monomethylamine methyltransferase MtmB2 (mtmB2), found in Methanosarcina barkeri.